The sequence spans 333 residues: L-lactate dehydrogenase B chain (333 aa).

NAD(+) contacts are provided by residues Gly-29–Lys-57 and Arg-99. Positions 106, 138, and 169 each coordinate substrate. Position 138 (Asn-138) interacts with NAD(+). His-193 functions as the Proton acceptor in the catalytic mechanism. Residue Thr-248 coordinates substrate.

Belongs to the LDH/MDH superfamily. LDH family. Homotetramer.

The protein resides in the cytoplasm. It carries out the reaction (S)-lactate + NAD(+) = pyruvate + NADH + H(+). Its pathway is fermentation; pyruvate fermentation to lactate; (S)-lactate from pyruvate: step 1/1. In terms of biological role, interconverts simultaneously and stereospecifically pyruvate and lactate with concomitant interconversion of NADH and NAD(+). In Caiman crocodilus apaporiensis (Rio Apaporis caiman), this protein is L-lactate dehydrogenase B chain (LDHB).